The following is a 598-amino-acid chain: UvrABC system protein C (598 aa).

The 78-residue stretch at 14 to 91 (DSPGCYLHKD…IQKNMPKYNI (78 aa)) folds into the GIY-YIG domain. Residues 196–231 (DKIIEDLRSKMLAASEEMAFERAAEYRDLISGIATM) form the UVR domain.

The protein belongs to the UvrC family. As to quaternary structure, interacts with UvrB in an incision complex.

It localises to the cytoplasm. Functionally, the UvrABC repair system catalyzes the recognition and processing of DNA lesions. UvrC both incises the 5' and 3' sides of the lesion. The N-terminal half is responsible for the 3' incision and the C-terminal half is responsible for the 5' incision. The chain is UvrABC system protein C from Streptococcus pyogenes serotype M6 (strain ATCC BAA-946 / MGAS10394).